Reading from the N-terminus, the 494-residue chain is MSEDSEVVLVGGGIMSLTLAAMLRELKPSLHISVYEMFEDLATESSSVWNNAGTGHQALCELNYTPQKEDGSIDVSKALKINQQFELSKEFWAYCIRKQILKGAHTFLNPVPHLSFVVDDIVPYLKKRYETLKDSPLFKNMIYTEDREQIKEWAPLLLEGRGETQKMAVTYMAGGSDVDFGEIARQFGEKLSQKEGFDVYTHHKVRDLTKEGNIWLLDVIDTKSYERKQVKAKFVFLGAGGGSFPLLQKSGIPEGRGYGGFPVGGLWLICNNREIIEKHNAKIYGKASIGDPPMSVPHLDTRIIRGKKELLFGPYAGFNTKFLKKGSFFDFPSSIRLNNFIPMIQAGIDNVPLTIYLIKQILSTDRMRMRKLEVFFPAAQFPDWNAQFAGQRVQVIKKDKNGRGSLQFGTEVITSSDGSLAALLGASPGASTVVDIMLEVLKRCFGDEMKTSAWQDKLAEMVPSYNRSLEENITHFNECRLKTAQTLHLPFDEI.

This sequence belongs to the MQO family. FAD is required as a cofactor.

It carries out the reaction (S)-malate + a quinone = a quinol + oxaloacetate. Its pathway is carbohydrate metabolism; tricarboxylic acid cycle; oxaloacetate from (S)-malate (quinone route): step 1/1. The chain is Probable malate:quinone oxidoreductase from Helicobacter hepaticus (strain ATCC 51449 / 3B1).